The chain runs to 103 residues: MQNQQIRIRLKAFDHRLIDQSTQEIVETAKRTGAQVRGPIPLPTRKERFTVLVSPHVNKDARDQYEIRTHKRVLDIVQPTEKTVDALMKLDLAAGVEVQISLG.

The protein belongs to the universal ribosomal protein uS10 family. As to quaternary structure, part of the 30S ribosomal subunit.

In terms of biological role, involved in the binding of tRNA to the ribosomes. The protein is Small ribosomal subunit protein uS10 of Pseudomonas savastanoi pv. phaseolicola (strain 1448A / Race 6) (Pseudomonas syringae pv. phaseolicola (strain 1448A / Race 6)).